The primary structure comprises 274 residues: NAD-dependent protein deacetylase (274 aa).

The Deacetylase sirtuin-type domain maps to 1 to 274 (MDSRMSDLQA…CDEVLAEVVS (274 aa)). NAD(+) contacts are provided by residues 26–46 (GAGC…GQWK) and 104–107 (QNVD). The active-site Proton acceptor is the H122. Zn(2+)-binding residues include C130, C133, C181, and C184. Residues 221–223 (GSS), 247–249 (NLG), and C265 contribute to the NAD(+) site.

This sequence belongs to the sirtuin family. Class II subfamily. The cofactor is Zn(2+).

Its subcellular location is the cytoplasm. The enzyme catalyses N(6)-acetyl-L-lysyl-[protein] + NAD(+) + H2O = 2''-O-acetyl-ADP-D-ribose + nicotinamide + L-lysyl-[protein]. NAD-dependent protein deacetylase which modulates the activities of several enzymes which are inactive in their acetylated form. In Bordetella bronchiseptica (strain ATCC BAA-588 / NCTC 13252 / RB50) (Alcaligenes bronchisepticus), this protein is NAD-dependent protein deacetylase.